The sequence spans 150 residues: Phosphoribosyl-AMP cyclohydrolase (150 aa).

Aspartate 93 is a binding site for Mg(2+). Residue cysteine 94 participates in Zn(2+) binding. Positions 95 and 97 each coordinate Mg(2+). Zn(2+) is bound by residues cysteine 112 and cysteine 119.

It belongs to the PRA-CH family. As to quaternary structure, homodimer. Requires Mg(2+) as cofactor. Zn(2+) serves as cofactor.

The protein resides in the cytoplasm. The enzyme catalyses 1-(5-phospho-beta-D-ribosyl)-5'-AMP + H2O = 1-(5-phospho-beta-D-ribosyl)-5-[(5-phospho-beta-D-ribosylamino)methylideneamino]imidazole-4-carboxamide. It participates in amino-acid biosynthesis; L-histidine biosynthesis; L-histidine from 5-phospho-alpha-D-ribose 1-diphosphate: step 3/9. In terms of biological role, catalyzes the hydrolysis of the adenine ring of phosphoribosyl-AMP. The protein is Phosphoribosyl-AMP cyclohydrolase of Rhizobium etli (strain CIAT 652).